The sequence spans 110 residues: UPF0060 membrane protein BTH_I2792 (110 aa).

4 consecutive transmembrane segments (helical) span residues 9–29, 34–54, 64–84, and 86–106; these read ALFV…WLVL, PVWL…LLTL, AAYG…VDGV, and LSRW…VIAL.

This sequence belongs to the UPF0060 family.

The protein localises to the cell inner membrane. The chain is UPF0060 membrane protein BTH_I2792 from Burkholderia thailandensis (strain ATCC 700388 / DSM 13276 / CCUG 48851 / CIP 106301 / E264).